We begin with the raw amino-acid sequence, 204 residues long: Peptidyl-tRNA hydrolase (204 aa).

Tyr-19 contacts tRNA. The active-site Proton acceptor is the His-24. 3 residues coordinate tRNA: Tyr-70, Asn-72, and Asn-118.

The protein belongs to the PTH family. As to quaternary structure, monomer.

The protein localises to the cytoplasm. The catalysed reaction is an N-acyl-L-alpha-aminoacyl-tRNA + H2O = an N-acyl-L-amino acid + a tRNA + H(+). Functionally, hydrolyzes ribosome-free peptidyl-tRNAs (with 1 or more amino acids incorporated), which drop off the ribosome during protein synthesis, or as a result of ribosome stalling. In terms of biological role, catalyzes the release of premature peptidyl moieties from peptidyl-tRNA molecules trapped in stalled 50S ribosomal subunits, and thus maintains levels of free tRNAs and 50S ribosomes. The chain is Peptidyl-tRNA hydrolase from Prochlorococcus marinus (strain SARG / CCMP1375 / SS120).